Consider the following 396-residue polypeptide: Na(+)/H(+) antiporter NhaA 1 (396 aa).

The next 11 membrane-spanning stretches (helical) occupy residues Ala-15–Leu-35, Leu-60–Leu-80, Phe-96–Ile-116, Gly-126–Gly-146, Ile-155–Phe-175, Ala-179–Cys-199, Ile-207–Ala-227, Ser-255–Val-275, Pro-290–Leu-312, Leu-329–Leu-349, and Leu-363–Val-383.

Belongs to the NhaA Na(+)/H(+) (TC 2.A.33) antiporter family.

Its subcellular location is the cell inner membrane. The catalysed reaction is Na(+)(in) + 2 H(+)(out) = Na(+)(out) + 2 H(+)(in). In terms of biological role, na(+)/H(+) antiporter that extrudes sodium in exchange for external protons. The protein is Na(+)/H(+) antiporter NhaA 1 of Campylobacter hominis (strain ATCC BAA-381 / DSM 21671 / CCUG 45161 / LMG 19568 / NCTC 13146 / CH001A).